We begin with the raw amino-acid sequence, 257 residues long: Snake venom serine protease Haly-2 (257 aa).

A signal peptide spans 1 to 18 (MVLIRVLANLLILQLSYA). Residues 19–24 (QKSSEL) constitute a propeptide that is removed on maturation. In terms of domain architecture, Peptidase S1 spans 25–248 (IIGGDECNIN…HLEWIRSIIA (224 aa)). Intrachain disulfides connect Cys-31-Cys-162, Cys-49-Cys-65, Cys-97-Cys-255, Cys-141-Cys-209, Cys-173-Cys-188, and Cys-199-Cys-224. The Charge relay system role is filled by His-64. An N-linked (GlcNAc...) asparagine glycan is attached at Asn-100. Residue Asp-109 is the Charge relay system of the active site. The Charge relay system role is filled by Ser-203.

It belongs to the peptidase S1 family. Snake venom subfamily. In terms of assembly, monomer. As to expression, expressed by the venom gland.

It is found in the secreted. Functionally, snake venom serine protease that may act in the hemostasis system of the prey. The protein is Snake venom serine protease Haly-2 of Gloydius brevicauda (Korean slamosa snake).